The sequence spans 41 residues: uncharacterized protein (41 aa).

It localises to the plastid. The protein resides in the chloroplast. This is an uncharacterized protein from Trieres chinensis (Marine centric diatom).